The chain runs to 260 residues: Acetylglutamate kinase (260 aa).

Residues 46 to 47 (GG), Arg-68, and Asn-160 contribute to the substrate site.

Belongs to the acetylglutamate kinase family. ArgB subfamily.

It is found in the cytoplasm. The enzyme catalyses N-acetyl-L-glutamate + ATP = N-acetyl-L-glutamyl 5-phosphate + ADP. It participates in amino-acid biosynthesis; L-arginine biosynthesis; N(2)-acetyl-L-ornithine from L-glutamate: step 2/4. Catalyzes the ATP-dependent phosphorylation of N-acetyl-L-glutamate. The chain is Acetylglutamate kinase from Shewanella denitrificans (strain OS217 / ATCC BAA-1090 / DSM 15013).